The chain runs to 308 residues: Cytochrome b (308 aa).

4 helical membrane-spanning segments follow: residues 1 to 21 (FGLLLGICLIVQIVTGLLLAA), 45 to 66 (WLIRNLHANGASFFFICIYLHI), 81 to 101 (WNIGVILLLTLMATAFVGYVL), and 146 to 166 (FFALHFLLPFVIAGLTLVHLT). Positions 51 and 65 each coordinate heme b. 2 residues coordinate heme b: His150 and His164. His169 lines the a ubiquinone pocket. 3 helical membrane-spanning segments follow: residues 194 to 214 (TKDMLGFALMLIPLITLALFS), 256 to 276 (LGGVLALAASVLVLFLIPLLH), and 288 to 308 (LSQILFWTLVANLLVLTWVGS).

This sequence belongs to the cytochrome b family. In terms of assembly, the cytochrome bc1 complex contains 11 subunits: 3 respiratory subunits (MT-CYB, CYC1 and UQCRFS1), 2 core proteins (UQCRC1 and UQCRC2) and 6 low-molecular weight proteins (UQCRH/QCR6, UQCRB/QCR7, UQCRQ/QCR8, UQCR10/QCR9, UQCR11/QCR10 and a cleavage product of UQCRFS1). This cytochrome bc1 complex then forms a dimer. Heme b is required as a cofactor.

The protein localises to the mitochondrion inner membrane. Functionally, component of the ubiquinol-cytochrome c reductase complex (complex III or cytochrome b-c1 complex) that is part of the mitochondrial respiratory chain. The b-c1 complex mediates electron transfer from ubiquinol to cytochrome c. Contributes to the generation of a proton gradient across the mitochondrial membrane that is then used for ATP synthesis. The protein is Cytochrome b (MT-CYB) of Pomatostomus temporalis (Grey-crowned babbler).